A 219-amino-acid polypeptide reads, in one-letter code: tRNA (guanine-N(7)-)-methyltransferase (219 aa).

S-adenosyl-L-methionine-binding residues include Glu-43, Asp-68, Glu-101, and Asn-124. Positions 128 and 160 each coordinate substrate.

Belongs to the class I-like SAM-binding methyltransferase superfamily. TrmB family.

The enzyme catalyses guanosine(46) in tRNA + S-adenosyl-L-methionine = N(7)-methylguanosine(46) in tRNA + S-adenosyl-L-homocysteine. It functions in the pathway tRNA modification; N(7)-methylguanine-tRNA biosynthesis. Functionally, catalyzes the formation of N(7)-methylguanine at position 46 (m7G46) in tRNA. The sequence is that of tRNA (guanine-N(7)-)-methyltransferase from Clostridium botulinum (strain Eklund 17B / Type B).